We begin with the raw amino-acid sequence, 586 residues long: MDDELRERVRRAAERAALFNALKHGSDAQVGAIMGPMMGEHPDFRAHGDEIPGVIAPVIEDVNGMSDDEQRARLAELAPEDVEELDSEDEGDDHALPALPNAEAYDEVRMRCAPNPNGPWHVGHARMPSVIGTYKQRYDGSFVVRFDDTDPETKRPDLDAYDQILEDLSYLGFEADEVLTASDRVETYYEHARRLIGMGGAYTCSCPGAEFSDLKNSGEACPHRDKDPETVADEFEAMVDGEYNSGEMVLRVKTDITHKNPALRDWVAFRMVDTPHPRDAASGYRCWPMLDFQSGVDDHRTGVTHIIRGIDLQDSAKRQRFLYEYFGWEYPEVVHWGHVQLDAYDVAMSTSTIKERIAAGELEGWDDPRAPTMQSIRRRGIRGAAVVDAMVELGTSSSDVELAMSAVYANNRDLVDDTAPRQFLVRDGFEARGEGPEESHEAVEVPVDDGPDEATPQVHPEHPDRGDREIPVGERVLVEATDLPAAGDRVWLKGYGPVRYDGERFAFLDADIDIVREEGVDVVQWVPAEHNVDVRLRTMDGDVTGYAEPGFADRDADEIVQFVRVGFARVDAHRDGGASVAYFTHP.

Positions 114–124 (PNPNGPWHVGH) match the 'HIGH' region motif. Basic and acidic residues-rich tracts occupy residues 431 to 443 (ARGE…HEAV) and 459 to 468 (HPEHPDRGDR). Positions 431-468 (ARGEGPEESHEAVEVPVDDGPDEATPQVHPEHPDRGDR) are disordered.

Belongs to the class-I aminoacyl-tRNA synthetase family. Glutamate--tRNA ligase type 2 subfamily.

The protein localises to the cytoplasm. It catalyses the reaction tRNA(Glu) + L-glutamate + ATP = L-glutamyl-tRNA(Glu) + AMP + diphosphate. Catalyzes the attachment of glutamate to tRNA(Glu) in a two-step reaction: glutamate is first activated by ATP to form Glu-AMP and then transferred to the acceptor end of tRNA(Glu). This chain is Glutamate--tRNA ligase, found in Halobacterium salinarum (strain ATCC 29341 / DSM 671 / R1).